The primary structure comprises 300 residues: Probable amino-acid ABC transporter periplasmic-binding protein y4tE (300 aa).

Positions 1-27 (MTHLKISKTAPAVARFLPAGRIASVAA) are cleaved as a signal peptide.

The protein belongs to the bacterial solute-binding protein 3 family.

It is found in the periplasm. In terms of biological role, probably part of the binding-protein-dependent transport system y4tEFGH for an amino acid. The chain is Probable amino-acid ABC transporter periplasmic-binding protein y4tE from Sinorhizobium fredii (strain NBRC 101917 / NGR234).